The primary structure comprises 120 residues: MIKGIGIDITEIERVKKAATAHSQFIQHVLTPTELEQYSQFSGQRSVEYLAGRWSLKESFAKAYGTGIGANLGFHDIEIIDNQYGAPIVTKSPYNGNAHASVSHTATLVMTEVILESENK.

D8 and E58 together coordinate Mg(2+).

The protein belongs to the P-Pant transferase superfamily. AcpS family. Mg(2+) serves as cofactor.

It is found in the cytoplasm. The enzyme catalyses apo-[ACP] + CoA = holo-[ACP] + adenosine 3',5'-bisphosphate + H(+). In terms of biological role, transfers the 4'-phosphopantetheine moiety from coenzyme A to a Ser of acyl-carrier-protein. In Limosilactobacillus reuteri (strain DSM 20016) (Lactobacillus reuteri), this protein is Holo-[acyl-carrier-protein] synthase.